Consider the following 724-residue polypeptide: Threonine--tRNA ligase 2, cytoplasmic (724 aa).

At Ala-2 the chain carries N-acetylalanine. Residues 44 to 72 (QAEGPCLTREVAQLRAENRELRHCLYRLR) adopt a coiled-coil conformation. Residues 90–112 (RAEAGRAAAGAQPPPSQSLEEDV) form a disordered region. The TGS domain maps to 155-220 (DSSNVITVRV…EGDATVELLT (66 aa)). Ser-451 is modified (phosphoserine).

This sequence belongs to the class-II aminoacyl-tRNA synthetase family. In terms of assembly, may be a component of the multisynthetase complex (MSC), a large multi-subunit complex which contains at least eight different aminoacyl-tRNA synthetases plus three auxillary subunits AIMP1, AIMP2 and EEF1E1. Interacts with the MSC components EPRS1, AIMP1, AIMP2 and KARS1.

The protein resides in the cytoplasm. It is found in the nucleus. It catalyses the reaction tRNA(Thr) + L-threonine + ATP = L-threonyl-tRNA(Thr) + AMP + diphosphate + H(+). Its function is as follows. Catalyzes the attachment of threonine to tRNA(Thr) in a two-step reaction: threonine is first activated by ATP to form Thr-AMP and then transferred to the acceptor end of tRNA(Thr). Also edits incorrectly charged tRNA(Thr) via its editing domain, at the post-transfer stage. The chain is Threonine--tRNA ligase 2, cytoplasmic (TARS3) from Bos taurus (Bovine).